Reading from the N-terminus, the 141-residue chain is Drosulfakinins (141 aa).

An N-terminal signal peptide occupies residues M1 to A31. A propeptide spanning residues Q32 to D73 is cleaved from the precursor. F82 is modified (phenylalanine amide). The propeptide occupies V86–A111. Position 117 is a sulfotyrosine (Y117). F122 is subject to Phenylalanine amide. Y134 is subject to Sulfotyrosine. Residue F139 is modified to Phenylalanine amide.

The protein belongs to the gastrin/cholecystokinin family.

It localises to the secreted. In terms of biological role, drosulfakinin-0 (DSK 0) plays diverse biological roles including regulating gut muscle contraction in adults but not in larvae. In Drosophila simulans (Fruit fly), this protein is Drosulfakinins.